We begin with the raw amino-acid sequence, 406 residues long: Arginine decarboxylase (406 aa).

Residue lysine 8 is modified to N6-(pyridoxal phosphate)lysine. 192–202 (VDFGGGLGIDY) contributes to the substrate binding site.

The protein belongs to the Orn/Lys/Arg decarboxylase class-II family. SpeA subfamily. The cofactor is pyridoxal 5'-phosphate. Mg(2+) is required as a cofactor.

It catalyses the reaction L-arginine + H(+) = agmatine + CO2. Its pathway is amine and polyamine biosynthesis; agmatine biosynthesis; agmatine from L-arginine: step 1/1. This chain is Arginine decarboxylase (SPE2), found in Theobroma cacao (Cacao).